The primary structure comprises 163 residues: Probable RNA-binding protein EIF1AD (163 aa).

The region spanning 18-96 (MMEDDYELPT…VKAEISKILT (79 aa)) is the S1-like domain. Residues 106 to 163 (AGIWPERFAKNPPQEAKAQNDDEDSDFEDDLTPNTNRPVQESDEEDEDTDTESSDEED) are disordered. Composition is skewed to acidic residues over residues 126–136 (DDEDSDFEDDL) and 146–163 (ESDEEDEDTDTESSDEED).

The protein belongs to the EIF1AD family.

This chain is Probable RNA-binding protein EIF1AD, found in Drosophila pseudoobscura pseudoobscura (Fruit fly).